Here is a 333-residue protein sequence, read N- to C-terminus: Transcription factor MYB36 (333 aa).

HTH myb-type domains lie at 9–62 and 63–117; these read KANV…LNYL and RPNI…KKKL. DNA-binding regions (H-T-H motif) lie at residues 38–62 and 90–113; these read WIAL…LNYL and WSII…NTKL. The interval 119 to 150 is disordered; it reads GRQKQMNRQDSITDSTENNLSNNNNNKSPQNL. Residues 122-135 show a composition bias toward polar residues; the sequence is KQMNRQDSITDSTE. A compositionally biased stretch (low complexity) spans 136–150; that stretch reads NNLSNNNNNKSPQNL.

In terms of tissue distribution, expressed in leaves, roots (endodermis-specific) and seedlings.

It is found in the nucleus. Transcription factors that activates genes required for endodermal differentiation but represses genes involved in proliferative divisions, thus regulating the transition from proliferation to differentiation in root endodermis. Required for Casparian strip formation by positively regulating the expression of the Casparian strip genes CASP1, PER64 and ESB1 and other endodermis-specific genes, thus triggering correct localized lignin biosynthesis in root endodermis and subsequently regulating global ion homeostasis. The sequence is that of Transcription factor MYB36 from Arabidopsis thaliana (Mouse-ear cress).